Here is a 423-residue protein sequence, read N- to C-terminus: MATKRRPLRPNLGGTAGSPSSSGSNMNFRPGGPDITRSEARGTRPTAAPTSIREILVMGVIHLCKKTIFFNTDLKVALYLGSLFVISVIGDFVPFPKTYFARSDNLFNQYFVKIGWGWTLLFVVPFLVLSAYTITCGDHKRMLRHHFPRIVIATFFWFFWTKLFNVVENSYGRCTTKGYATKSSCLKAGHLWKGFDISGHAFILIHSSLVLIEEARPIIRWETIKEHIRNERHNRSTAENSGTNPLRTLNEEQMRSLQFLYKRLTPIIRTLFIGMAALQLLWDIMLVGTMLYYHRMIEKVISGIIAILTWYFTYRFWYPTPGLLPEAPGNGSFSYQREIPTFPFKRPSHLSTGAATTSSGSNSSRTNLNGKAATTGVPRDQQIPTFMGMPLFTSPKAASAAANLLMSDQQKRERDREQQTLES.

The interval 1-47 (MATKRRPLRPNLGGTAGSPSSSGSNMNFRPGGPDITRSEARGTRPTA) is disordered. Residues 1–75 (MATKRRPLRP…KTIFFNTDLK (75 aa)) lie on the Cytoplasmic side of the membrane. A helical transmembrane segment spans residues 76-96 (VALYLGSLFVISVIGDFVPFP). The Lumenal portion of the chain corresponds to 97–113 (KTYFARSDNLFNQYFVK). Residues 114–134 (IGWGWTLLFVVPFLVLSAYTI) form a helical membrane-spanning segment. The Cytoplasmic segment spans residues 135-146 (TCGDHKRMLRHH). Residues 147–167 (FPRIVIATFFWFFWTKLFNVV) traverse the membrane as a helical segment. At 168 to 191 (ENSYGRCTTKGYATKSSCLKAGHL) the chain is on the lumenal side. A helical membrane pass occupies residues 192–212 (WKGFDISGHAFILIHSSLVLI). The active site involves His-200. The Cytoplasmic segment spans residues 213 to 270 (EEARPIIRWETIKEHIRNERHNRSTAENSGTNPLRTLNEEQMRSLQFLYKRLTPIIRT). The chain crosses the membrane as a helical span at residues 271–291 (LFIGMAALQLLWDIMLVGTML). Over 292-299 (YYHRMIEK) the chain is Lumenal. His-294 is an active-site residue. Residues 300-320 (VISGIIAILTWYFTYRFWYPT) traverse the membrane as a helical segment. At 321-423 (PGLLPEAPGN…RDREQQTLES (103 aa)) the chain is on the cytoplasmic side. Disordered stretches follow at residues 344 to 381 (FKRPSHLSTGAATTSSGSNSSRTNLNGKAATTGVPRDQ) and 400 to 423 (AAANLLMSDQQKRERDREQQTLES). Low complexity predominate over residues 351–367 (STGAATTSSGSNSSRTN). A compositionally biased stretch (basic and acidic residues) spans 409–423 (QQKRERDREQQTLES).

It belongs to the FIT family. FIT2 subfamily.

The protein resides in the endoplasmic reticulum membrane. The enzyme catalyses an acyl-CoA + H2O = an acyl-4'-phosphopantetheine + adenosine 3',5'-bisphosphate + 2 H(+). Fatty acyl-coenzyme A (CoA) diphosphatase that hydrolyzes fatty acyl-CoA to yield acyl-4'-phosphopantetheine and adenosine 3',5'-bisphosphate. Preferentially hydrolyzes unsaturated long-chain acyl-CoA substrates in the endoplasmic reticulum (ER) lumen. This catalytic activity is required for maintaining ER structure and for lipid droplets (LDs) biogenesis, which are lipid storage organelles involved in maintaining lipid and energy homeostasis. May directly bind to diacylglycerol (DAGs) and triacylglycerol, which is also important for LD biogenesis. May support directional budding of nacent LDs from the ER into the cytosol by reducing DAG levels at sites of LD formation. Plays a role in the regulation of cell morphology and cytoskeletal organization. Required for correct morphology of nociceptive multi-dendritic sensory neurons. Required for normal mechanical amplification in hearing. The protein is Acyl-coenzyme A diphosphatase FITM2 of Drosophila melanogaster (Fruit fly).